The following is a 203-amino-acid chain: Small ribosomal subunit protein uS10m (203 aa).

Residues 1-14 (MLRNTIALRSFIRT) constitute a mitochondrion transit peptide. S193 is modified (phosphoserine).

This sequence belongs to the universal ribosomal protein uS10 family. As to quaternary structure, component of the mitochondrial small ribosomal subunit (mt-SSU). Mature yeast 74S mitochondrial ribosomes consist of a small (37S) and a large (54S) subunit. The 37S small subunit contains a 15S ribosomal RNA (15S mt-rRNA) and 34 different proteins. The 54S large subunit contains a 21S rRNA (21S mt-rRNA) and 46 different proteins.

The protein resides in the mitochondrion. Functionally, component of the mitochondrial ribosome (mitoribosome), a dedicated translation machinery responsible for the synthesis of mitochondrial genome-encoded proteins, including at least some of the essential transmembrane subunits of the mitochondrial respiratory chain. The mitoribosomes are attached to the mitochondrial inner membrane and translation products are cotranslationally integrated into the membrane. The polypeptide is Small ribosomal subunit protein uS10m (RSM10) (Saccharomyces cerevisiae (strain ATCC 204508 / S288c) (Baker's yeast)).